Consider the following 873-residue polypeptide: Valine--tRNA ligase (873 aa).

Residues 46–56 carry the 'HIGH' region motif; sequence PNVTGKLHIGH. The 'KMSKS' region motif lies at 525–529; sequence KMSKS. Residue lysine 528 participates in ATP binding. Positions 804–873 form a coiled coil; it reads NDDFIDKEKM…ELIQDKLNKM (70 aa).

It belongs to the class-I aminoacyl-tRNA synthetase family. ValS type 1 subfamily. In terms of assembly, monomer.

It localises to the cytoplasm. It carries out the reaction tRNA(Val) + L-valine + ATP = L-valyl-tRNA(Val) + AMP + diphosphate. In terms of biological role, catalyzes the attachment of valine to tRNA(Val). As ValRS can inadvertently accommodate and process structurally similar amino acids such as threonine, to avoid such errors, it has a 'posttransfer' editing activity that hydrolyzes mischarged Thr-tRNA(Val) in a tRNA-dependent manner. This chain is Valine--tRNA ligase, found in Mesoplasma florum (strain ATCC 33453 / NBRC 100688 / NCTC 11704 / L1) (Acholeplasma florum).